Here is a 121-residue protein sequence, read N- to C-terminus: LOB domain-containing protein 23 (121 aa).

An LOB domain is found at 4-105; sequence KRCAACKYLR…NELAKTQAEI (102 aa).

The protein belongs to the LOB domain-containing protein family.

The protein is LOB domain-containing protein 23 (LBD23) of Arabidopsis thaliana (Mouse-ear cress).